Consider the following 292-residue polypeptide: MPSLKDLRNRIASVKATQKITKAMQMVAAAKLRRAQEAAEAARPYSQRMGAVLANIAQNVTGEDAPALMAGTGKDDVHLLVVCTAERGLCGGFNSQIARLARDHARKLLAEGKTVKIITVGKKGADILRREFASLIIDHVNLREVKQLAFVHADQIGHKVIELFEQGEFDVCTLFYSEFKSVIAQIPTAQQIIPASAGDVAQAETAGDAIYEYEPDPAAILSTLIPRNISVQIFRALLENVAGEMGAKMSAMDNATRNAGDMINKLSITYNRQRQAQITKELIEIISGAEAL.

Belongs to the ATPase gamma chain family. As to quaternary structure, F-type ATPases have 2 components, CF(1) - the catalytic core - and CF(0) - the membrane proton channel. CF(1) has five subunits: alpha(3), beta(3), gamma(1), delta(1), epsilon(1). CF(0) has three main subunits: a, b and c.

It is found in the cell inner membrane. Its function is as follows. Produces ATP from ADP in the presence of a proton gradient across the membrane. The gamma chain is believed to be important in regulating ATPase activity and the flow of protons through the CF(0) complex. The protein is ATP synthase gamma chain of Brucella anthropi (strain ATCC 49188 / DSM 6882 / CCUG 24695 / JCM 21032 / LMG 3331 / NBRC 15819 / NCTC 12168 / Alc 37) (Ochrobactrum anthropi).